A 393-amino-acid polypeptide reads, in one-letter code: S-adenosylmethionine synthase 2 (393 aa).

Glu9 contributes to the Mg(2+) binding site. His15 serves as a coordination point for ATP. Glu43 is a K(+) binding site. The L-methionine site is built by Glu56 and Gln99. ATP-binding positions include 167 to 169 (DGK), 235 to 238 (SGRF), Asp246, 252 to 253 (RM), Ala269, Lys273, and Lys277. Asp246 provides a ligand contact to L-methionine. Lys277 contacts L-methionine.

It belongs to the AdoMet synthase family. Homotetramer. Requires Mn(2+) as cofactor. Mg(2+) serves as cofactor. Co(2+) is required as a cofactor. It depends on K(+) as a cofactor.

It localises to the cytoplasm. The enzyme catalyses L-methionine + ATP + H2O = S-adenosyl-L-methionine + phosphate + diphosphate. It functions in the pathway amino-acid biosynthesis; S-adenosyl-L-methionine biosynthesis; S-adenosyl-L-methionine from L-methionine: step 1/1. Its function is as follows. Catalyzes the formation of S-adenosylmethionine from methionine and ATP. The reaction comprises two steps that are both catalyzed by the same enzyme: formation of S-adenosylmethionine (AdoMet) and triphosphate, and subsequent hydrolysis of the triphosphate. This chain is S-adenosylmethionine synthase 2 (SAMS2), found in Daucus carota (Wild carrot).